The sequence spans 275 residues: 2-dehydro-3-deoxyphosphooctonate aldolase (275 aa).

The protein belongs to the KdsA family.

The protein resides in the cytoplasm. It carries out the reaction D-arabinose 5-phosphate + phosphoenolpyruvate + H2O = 3-deoxy-alpha-D-manno-2-octulosonate-8-phosphate + phosphate. Its pathway is carbohydrate biosynthesis; 3-deoxy-D-manno-octulosonate biosynthesis; 3-deoxy-D-manno-octulosonate from D-ribulose 5-phosphate: step 2/3. It participates in bacterial outer membrane biogenesis; lipopolysaccharide biosynthesis. In Francisella tularensis subsp. mediasiatica (strain FSC147), this protein is 2-dehydro-3-deoxyphosphooctonate aldolase.